A 1483-amino-acid chain; its full sequence is ABC multidrug transporter atrA (1483 aa).

A compositionally biased stretch (basic and acidic residues) spans 1–19 (MASHKKSEDPLVVKDRQEQ). The interval 1 to 92 (MASHKKSEDP…NDPAVDPQGP (92 aa)) is disordered. Asn32 carries an N-linked (GlcNAc...) asparagine glycan. The segment covering 71–82 (PTRTSTLATISE) has biased composition (polar residues). Asn123 and Asn322 each carry an N-linked (GlcNAc...) asparagine glycan. Residues 147-398 (FRIGEMMKNR…FERQGWECPQ (252 aa)) form the ABC transporter 1 domain. The next 5 helical transmembrane spans lie at 512 to 532 (TVST…VFYG), 539 to 559 (GFTA…LIAM), 595 to 615 (IPVK…LAGL), 620 to 640 (GQFF…SAVF), and 654 to 674 (MGLA…VLPV). The N-linked (GlcNAc...) asparagine glycan is linked to Asn718. The chain crosses the membrane as a helical span at residues 759-779 (FGILIAFLVGFMMIYFIATEL). N-linked (GlcNAc...) asparagine glycosylation is present at Asn780. The ABC transporter 2 domain maps to 840-1083 (FTWRDVCYDI…LLNYFESNGA (244 aa)). 876-883 (GVSGAGKT) contributes to the ATP binding site. Residues Asn947 and Asn1146 are each glycosylated (N-linked (GlcNAc...) asparagine). The next 5 helical transmembrane spans lie at 1179-1199 (YIAS…FSFF), 1215-1235 (LFML…LFVT), 1254-1274 (AFLI…GILT), 1293-1313 (LVLL…HMAI), and 1320-1340 (ETAS…CGVM). N-linked (GlcNAc...) asparagine glycosylation is present at Asn1413. Residues 1444–1464 (FGLMWVYIVFNIFLATMLYYT) traverse the membrane as a helical segment. Asn1471 carries N-linked (GlcNAc...) asparagine glycosylation.

The protein belongs to the ABC transporter superfamily. ABCG family. PDR (TC 3.A.1.205) subfamily.

The protein localises to the cell membrane. It catalyses the reaction (R)-miconazole(in) + ATP + H2O = (R)-miconazole(out) + ADP + phosphate + H(+). In terms of biological role, pleiotropic ABC efflux transporter involved in the basal level of azole susceptibility. Confers resistance to miconazole and clotrimazole. This is ABC multidrug transporter atrA from Aspergillus oryzae (strain ATCC 42149 / RIB 40) (Yellow koji mold).